The chain runs to 51 residues: UPF0391 membrane protein Mbur_2216 (51 aa).

Helical transmembrane passes span Met1–Leu21 and Met31–Leu51.

It belongs to the UPF0391 family.

It localises to the cell membrane. This chain is UPF0391 membrane protein Mbur_2216, found in Methanococcoides burtonii (strain DSM 6242 / NBRC 107633 / OCM 468 / ACE-M).